An 838-amino-acid polypeptide reads, in one-letter code: Leucine--tRNA ligase 1 (838 aa).

The short motif at 40 to 51 (PYPSGAGLHVGH) is the 'HIGH' region element. The short motif at 608–612 (KMSKS) is the 'KMSKS' region element. Lysine 611 contributes to the ATP binding site.

Belongs to the class-I aminoacyl-tRNA synthetase family.

It is found in the cytoplasm. It catalyses the reaction tRNA(Leu) + L-leucine + ATP = L-leucyl-tRNA(Leu) + AMP + diphosphate. This Rhizobium johnstonii (strain DSM 114642 / LMG 32736 / 3841) (Rhizobium leguminosarum bv. viciae) protein is Leucine--tRNA ligase 1.